Consider the following 446-residue polypeptide: Dimethylsulfoniopropionate lyase DddP (446 aa).

Positions 1 to 13 (MNQHYSETRKIDP) are enriched in basic and acidic residues. The interval 1-30 (MNQHYSETRKIDPSRGATLGDNTPNDNNRI) is disordered. A divalent metal cation is bound by residues Asp295, Asp297, Asp307, His371, Glu406, and Glu421.

Belongs to the peptidase M24B family. Homodimer. The cofactor is a divalent metal cation.

It carries out the reaction S,S-dimethyl-beta-propiothetin = acrylate + dimethyl sulfide + H(+). In terms of biological role, able to cleave dimethylsulfoniopropionate (DMSP), releasing dimethyl sulfide (DMS). DMS is the principal form by which sulfur is transported from oceans to the atmosphere. The real activity of the protein is however subject to debate and it is unclear whether it constitutes a real dimethylsulfoniopropionate lyase in vivo: the low activity with DMSP as substrate suggests that DMSP is not its native substrate. This Roseovarius nubinhibens (strain ATCC BAA-591 / DSM 15170 / ISM) protein is Dimethylsulfoniopropionate lyase DddP.